A 239-amino-acid polypeptide reads, in one-letter code: Tetraspanin-9 (239 aa).

3 helical membrane-spanning segments follow: residues 14-34 (FLFNLIFWLCGCGLLGVGIWL), 56-76 (LVIAIGTIVMVTGFLGCLGAI), and 86-106 (FFIVLLIILLAELILIILFFV). N-linked (GlcNAc...) asparagine glycans are attached at residues N180 and N181. The chain crosses the membrane as a helical span at residues 204–224 (VLGTVGMCLLITQILGMAFSM).

This sequence belongs to the tetraspanin (TM4SF) family. Found in a complex with GP6. Glycosylated.

It localises to the membrane. This Ovis aries (Sheep) protein is Tetraspanin-9 (TSPAN9).